The sequence spans 345 residues: MNTAELLRKIIRRENLTEDEARSIANSVMKAEVPEIVTAGFLVGLATKGESVEEITGFAKAMRDNALHINFPSALDTAGTGGDGLNTLNVSTAVALLISQVYPVAKHGNRAVSGKSGSADVLEALGYNIIVKPELAEKLIKESKFVFLFAQLYHPAMKNVANVRKTLGVRTIFNVLGPLTNPANARYQMIGVFSKEFLPKLAEAVVRLDYDRVILYNGFPSLDEISTQGITYVYEIEKDKIVSYTVSINDFGLKDEIPVSKLTVNDATHSALRILKAFKGKDEEARRFIGINTAMALYLIRKVKDLKDGYEYALQLMDSGIPHVRSLIEKNGDLSNFNKLVEKID.

Residues glycine 79, 82–83 (GD), threonine 87, 89–92 (NVST), 106–114 (KHGNRAVSG), and serine 118 contribute to the 5-phospho-alpha-D-ribose 1-diphosphate site. Glycine 79 contacts anthranilate. Serine 91 contributes to the Mg(2+) binding site. Asparagine 109 contacts anthranilate. Anthranilate is bound at residue arginine 164. 2 residues coordinate Mg(2+): aspartate 223 and glutamate 224.

The protein belongs to the anthranilate phosphoribosyltransferase family. As to quaternary structure, homodimer. The cofactor is Mg(2+).

The enzyme catalyses N-(5-phospho-beta-D-ribosyl)anthranilate + diphosphate = 5-phospho-alpha-D-ribose 1-diphosphate + anthranilate. It functions in the pathway amino-acid biosynthesis; L-tryptophan biosynthesis; L-tryptophan from chorismate: step 2/5. In terms of biological role, catalyzes the transfer of the phosphoribosyl group of 5-phosphorylribose-1-pyrophosphate (PRPP) to anthranilate to yield N-(5'-phosphoribosyl)-anthranilate (PRA). This is Anthranilate phosphoribosyltransferase from Sulfurisphaera tokodaii (strain DSM 16993 / JCM 10545 / NBRC 100140 / 7) (Sulfolobus tokodaii).